The primary structure comprises 991 residues: Toll-like receptor 13 (991 aa).

The first 68 residues, 1–68, serve as a signal peptide directing secretion; it reads MSGLYRILVQ…GFSLPPVAET (68 aa). Residues 69-783 are Extracellular-facing; it reads YGFNKCTQYE…DAMCNFDLGK (715 aa). Asn-93, Asn-109, and Asn-125 each carry an N-linked (GlcNAc...) asparagine glycan. 25 LRR repeats span residues 104-125, 128-149, 152-174, 175-196, 199-220, 225-246, 248-268, 271-292, 295-315, 318-338, 348-368, 372-394, 397-418, 421-442, 445-466, 469-490, 493-514, 517-538, 541-562, 565-585, 594-617, 620-641, 644-665, 672-693, and 696-716; these read YTTH…SFTN, ALVD…AFRG, NLTL…EGLS, SLKT…AFTP, KLKY…LEAV, CLER…PRSL, SLTH…SALS, NLTN…YLKT, QLKS…SAKH, NLRA…DMKT, KLET…KQLA, RLLF…EFNA, SLQK…TWSS, NLTS…AFSP, HLEF…AFSG, ALKE…SFTQ, NLEV…TFRP, KLQS…SFSG, NLRS…LFSG, KLLI…RTLQ, SLKQ…FFQG, SLQE…QFDP, NLTK…LNAS, RLKI…MFSS, and SLQV…SHLK. Asn-152 and Asn-167 each carry an N-linked (GlcNAc...) asparagine glycan. N-linked (GlcNAc...) asparagine glycosylation is found at Asn-209, Asn-233, Asn-263, Asn-271, Asn-274, Asn-300, and Asn-310. Residues Asn-357, Asn-388, Asn-413, and Asn-421 are each glycosylated (N-linked (GlcNAc...) asparagine). N-linked (GlcNAc...) asparagine glycans are attached at residues Asn-644 and Asn-663. Asn-711 and Asn-742 each carry an N-linked (GlcNAc...) asparagine glycan. The 51-residue stretch at 729–779 folds into the LRRCT domain; the sequence is NKLQCTCDNLWFKNWSMNTEEVHIPFLRSYPCQQPGSQSLLIDFDDAMCNF. The helical transmembrane segment at 784 to 804 threads the bilayer; sequence VYFLCSFSMVLSTMVFSWFST. The Cytoplasmic segment spans residues 805–991; sequence KMIASLWYGL…KENTHLIVVE (187 aa). Positions 832 to 975 constitute a TIR domain; it reads FLYDAFVSFS…LFWARIRNAL (144 aa).

Belongs to the Toll-like receptor family. As to quaternary structure, binds MYD88 via their respective TIR domains. Interacts with UNC93B1.

The protein resides in the endosome membrane. Functionally, component of innate and adaptive immunity that recognizes and binds 23S rRNA from bacteria. TLRs (Toll-like receptors) control host immune response against pathogens through recognition of molecular patterns specific to microorganisms. Acts via MYD88 and TRAF6, leading to NF-kappa-B activation, cytokine secretion and the inflammatory response. Specifically binds the 5'-CGGAAAGACC-3' sequence on bacterial 23S rRNA, a sequence also bound by MLS group antibiotics (including erythromycin). May also recognize vesicular stomatitis virus; however, these data require additional evidences. This Mus musculus (Mouse) protein is Toll-like receptor 13 (Tlr13).